The primary structure comprises 397 residues: Protein EMSY-LIKE 3 (397 aa).

The segment at 1 to 40 (MDYRPSDSSGTDDDLPPSHQGRYQRNARPTGNGRPSVLNS) is disordered. Positions 50-137 (METQIHLIEQ…PQLVHDAPSP (88 aa)) constitute an ENT domain. Residues 81–107 (ESLITELRKELRVSDEEHRELLSRVNA) are a coiled coil. Disordered stretches follow at residues 122–221 (SLQS…SYDP) and 284–330 (DPGI…TQNG). The segment covering 164 to 174 (LHPSMQPSSSA) has biased composition (polar residues). A Nuclear localization signal motif is present at residues 175–182 (LRRGGPPP). Residues 363–389 (AEVEKAKRVLRDHELALMDAIAKLEEI) are a coiled coil. Ser390 bears the Phosphoserine mark.

Its subcellular location is the nucleus. Functionally, probably involved in the regulation of chromatin states. Contributes to basal immunity. In Arabidopsis thaliana (Mouse-ear cress), this protein is Protein EMSY-LIKE 3.